Reading from the N-terminus, the 71-residue chain is Pro-MCH (71 aa).

The N-terminal stretch at Ala1–Gly20 is a signal peptide.

It belongs to the melanin-concentrating hormone family.

Its subcellular location is the secreted. The chain is Pro-MCH (PMCH) from Hylobates lar (Lar gibbon).